The chain runs to 198 residues: Adenylate kinase (198 aa).

Residue 10–15 participates in ATP binding; the sequence is GAGKGT. An NMP region spans residues 30-59; sequence STGDMLRAAVQAGSEVGKRAKAVMDAGELV. AMP is bound by residues T31, R36, 57–59, 85–88, and Q92; these read ELV and GYPR. The tract at residues 126–142 is LID; the sequence is KRAEDAKAAGQPVRKDD. R127 serves as a coordination point for ATP. Residues R139 and R150 each coordinate AMP. A178 contacts ATP.

The protein belongs to the adenylate kinase family. Monomer.

Its subcellular location is the cytoplasm. The catalysed reaction is AMP + ATP = 2 ADP. The protein operates within purine metabolism; AMP biosynthesis via salvage pathway; AMP from ADP: step 1/1. Functionally, catalyzes the reversible transfer of the terminal phosphate group between ATP and AMP. Plays an important role in cellular energy homeostasis and in adenine nucleotide metabolism. In Mesorhizobium japonicum (strain LMG 29417 / CECT 9101 / MAFF 303099) (Mesorhizobium loti (strain MAFF 303099)), this protein is Adenylate kinase.